The chain runs to 382 residues: Inactive anthranilate O-methyltransferase 1 (382 aa).

S-adenosyl-L-homocysteine is bound by residues tyrosine 20, cysteine 61, asparagine 66, aspartate 102, leucine 103, serine 146, and tyrosine 147. 2 residues coordinate Mg(2+): glutamate 268 and phenylalanine 270.

This sequence belongs to the methyltransferase superfamily. Type-7 methyltransferase family. SABATH subfamily.

The sequence is that of Inactive anthranilate O-methyltransferase 1 (AAMT1I) from Zea mays (Maize).